Here is a 307-residue protein sequence, read N- to C-terminus: Aspartate carbamoyltransferase catalytic subunit (307 aa).

2 residues coordinate carbamoyl phosphate: arginine 58 and threonine 59. Lysine 86 is a binding site for L-aspartate. Positions 108, 138, and 141 each coordinate carbamoyl phosphate. Positions 171 and 223 each coordinate L-aspartate. Carbamoyl phosphate is bound by residues alanine 264 and proline 265.

The protein belongs to the aspartate/ornithine carbamoyltransferase superfamily. ATCase family. In terms of assembly, heterododecamer (2C3:3R2) of six catalytic PyrB chains organized as two trimers (C3), and six regulatory PyrI chains organized as three dimers (R2).

It carries out the reaction carbamoyl phosphate + L-aspartate = N-carbamoyl-L-aspartate + phosphate + H(+). It participates in pyrimidine metabolism; UMP biosynthesis via de novo pathway; (S)-dihydroorotate from bicarbonate: step 2/3. Functionally, catalyzes the condensation of carbamoyl phosphate and aspartate to form carbamoyl aspartate and inorganic phosphate, the committed step in the de novo pyrimidine nucleotide biosynthesis pathway. The sequence is that of Aspartate carbamoyltransferase catalytic subunit from Streptococcus suis (strain 98HAH33).